The primary structure comprises 201 residues: Small ribosomal subunit protein uS4c (201 aa).

A disordered region spans residues Leu15–Tyr45. Basic and acidic residues predominate over residues His35–Tyr45. Positions Met90–Leu153 constitute an S4 RNA-binding domain.

It belongs to the universal ribosomal protein uS4 family. Part of the 30S ribosomal subunit. Contacts protein S5. The interaction surface between S4 and S5 is involved in control of translational fidelity.

Its subcellular location is the plastid. The protein resides in the chloroplast. Its function is as follows. One of the primary rRNA binding proteins, it binds directly to 16S rRNA where it nucleates assembly of the body of the 30S subunit. In terms of biological role, with S5 and S12 plays an important role in translational accuracy. This Pyropia yezoensis (Susabi-nori) protein is Small ribosomal subunit protein uS4c (rps4).